The chain runs to 112 residues: Putative RNase TTE0752 (112 aa).

Residues R74 and H79 contribute to the active site. Positions 74–81 (RDKLIHEY) match the RX(4)HXY motif motif. O-di-AMP-tyrosine is present on Y81.

This sequence belongs to the HepT RNase toxin family. In terms of assembly, homodimer, probably forms a complex with cognate antitoxin TTE0751. Post-translationally, modified by cognate antitoxin TTE0751; probably at least 2 successive AMPylation events occur on Tyr-81.

Its function is as follows. Probable toxic component of a putative type VII toxin-antitoxin (TA) system, probably an RNase. Probably neutralized by cognate antitoxin TTE0751. Neutralization may be due to AMPylation by TTE0751. This is Putative RNase TTE0752 from Caldanaerobacter subterraneus subsp. tengcongensis (strain DSM 15242 / JCM 11007 / NBRC 100824 / MB4) (Thermoanaerobacter tengcongensis).